We begin with the raw amino-acid sequence, 191 residues long: HTH-type transcriptional regulator SAR0097 (191 aa).

The HTH tetR-type domain maps to Ala-12–Met-74. Positions Lys-37 to Phe-56 form a DNA-binding region, H-T-H motif.

The protein is HTH-type transcriptional regulator SAR0097 of Staphylococcus aureus (strain MRSA252).